The following is a 127-amino-acid chain: Glycine cleavage system H protein (127 aa).

Residues 27–109 (TVRVGITHIA…YGEGWLYEVK (83 aa)) enclose the Lipoyl-binding domain. Lys68 carries the post-translational modification N6-lipoyllysine.

This sequence belongs to the GcvH family. The glycine cleavage system is composed of four proteins: P, T, L and H. The cofactor is (R)-lipoate.

Functionally, the glycine cleavage system catalyzes the degradation of glycine. The H protein shuttles the methylamine group of glycine from the P protein to the T protein. The sequence is that of Glycine cleavage system H protein from Corynebacterium jeikeium (strain K411).